The following is a 578-amino-acid chain: E3 ubiquitin protein ligase RIN2 (578 aa).

Transmembrane regions (helical) follow at residues 6–26, 58–78, 111–131, 161–181, 186–206, and 272–292; these read LPVS…WTEL, FTIA…VLSL, LVIP…TVLC, VYSV…LSLM, IGSA…FETL, and YLHI…VLFL. The RING-type; atypical zinc finger occupies 337 to 379; that stretch reads CAICREPMAKAKRLHCNHLFHLGCLRSWLDQGLNEVYSCPTCR. The segment covering 504–513 has biased composition (polar residues); that stretch reads QASTSSTTVP. Positions 504–524 are disordered; the sequence is QASTSSTTVPPGNGGRTGGLH. Residues 538 to 578 form the CUE domain; that stretch reads NILAMAETVREVMPHVPDEIIFQDLQRTNSVAVTVNNLLQM.

In terms of assembly, interacts (via C-terminus) with RPM1 (via N-terminus).

The protein resides in the membrane. It carries out the reaction S-ubiquitinyl-[E2 ubiquitin-conjugating enzyme]-L-cysteine + [acceptor protein]-L-lysine = [E2 ubiquitin-conjugating enzyme]-L-cysteine + N(6)-ubiquitinyl-[acceptor protein]-L-lysine.. Its pathway is protein modification; protein ubiquitination. Functionally, E3 ubiquitin protein ligase that acts as a positive regulator of RPM1- and RPS2-dependent hypersensitive response (HR), in association with RIN3. Probably not required for RPM1 degradation during HR. This chain is E3 ubiquitin protein ligase RIN2 (RIN2), found in Arabidopsis thaliana (Mouse-ear cress).